The sequence spans 288 residues: GCN5-related N-acetyltransferase 6, chloroplastic (288 aa).

Residues 1–111 (MSTISIHRTE…YWTAAWLRAE (111 aa)) constitute a chloroplast transit peptide. The N-acetyltransferase domain occupies 151-288 (SCIVAVKKEE…DDTYLLQYTS (138 aa)). Acetyl-CoA-binding positions include 215 to 217 (LCV), 223 to 228 (RQGIAC), 254 to 256 (NSV), and Y261. The Proton donor role is filled by Y261.

The protein belongs to the acetyltransferase family. GNAT subfamily. Oligomer. Post-translationally, autoacetylated. Expressed in green tissues and in roots.

Its subcellular location is the plastid. The protein resides in the chloroplast. It is found in the cytoplasm. It localises to the perinuclear region. The catalysed reaction is an N-terminal L-alpha-aminoacyl-[protein] + acetyl-CoA = N-terminal N(alpha)-acetyl-L-alpha-aminoacyl-[protein] + CoA + H(+). It catalyses the reaction L-lysyl-[protein] + acetyl-CoA = N(6)-acetyl-L-lysyl-[protein] + CoA + H(+). The enzyme catalyses N-terminal L-alanyl-[protein] + acetyl-CoA = N-terminal N(alpha)-acetyl-L-alanyl-[protein] + CoA + H(+). It carries out the reaction N-terminal L-seryl-[protein] + acetyl-CoA = N-terminal N(alpha)-acetyl-L-seryl-[protein] + CoA + H(+). The catalysed reaction is N-terminal L-threonyl-[protein] + acetyl-CoA = N-terminal N(alpha)-acetyl-L-threonyl-[protein] + CoA + H(+). It catalyses the reaction N-terminal L-methionyl-[protein] + acetyl-CoA = N-terminal N(alpha)-acetyl-L-methionyl-[protein] + CoA + H(+). The enzyme catalyses N-terminal L-valyl-[protein] + acetyl-CoA = N-terminal N(alpha)-acetyl-L-valyl-[protein] + CoA + H(+). Its function is as follows. Protein acetyltransferase with dual specificity triggering both N-alpha-acetylation (NTA), with a large spectrum of modified N-termini, including methionine, alanine, serine, threonine and to a lower extent valine as substrates, and epsilon-lysine acetylation (KA). The polypeptide is GCN5-related N-acetyltransferase 6, chloroplastic (Arabidopsis thaliana (Mouse-ear cress)).